The following is a 60-amino-acid chain: Large ribosomal subunit protein uL30 (60 aa).

The protein belongs to the universal ribosomal protein uL30 family. As to quaternary structure, part of the 50S ribosomal subunit.

This Mycobacteroides abscessus (strain ATCC 19977 / DSM 44196 / CCUG 20993 / CIP 104536 / JCM 13569 / NCTC 13031 / TMC 1543 / L948) (Mycobacterium abscessus) protein is Large ribosomal subunit protein uL30.